Here is a 416-residue protein sequence, read N- to C-terminus: S-adenosylmethionine synthase (416 aa).

An ATP-binding site is contributed by histidine 14. Aspartate 16 is a binding site for Mg(2+). Residue glutamate 42 coordinates K(+). Glutamate 55 and glutamine 98 together coordinate L-methionine. Positions 98–108 (QSPDIARGVDT) are flexible loop. ATP-binding positions include 173–175 (DGK), 249–250 (KF), aspartate 258, 264–265 (RK), alanine 281, and lysine 285. Aspartate 258 is a binding site for L-methionine. Residue lysine 289 participates in L-methionine binding.

It belongs to the AdoMet synthase family. Homotetramer; dimer of dimers. The cofactor is Mg(2+). K(+) serves as cofactor.

The protein resides in the cytoplasm. The enzyme catalyses L-methionine + ATP + H2O = S-adenosyl-L-methionine + phosphate + diphosphate. Its pathway is amino-acid biosynthesis; S-adenosyl-L-methionine biosynthesis; S-adenosyl-L-methionine from L-methionine: step 1/1. Functionally, catalyzes the formation of S-adenosylmethionine (AdoMet) from methionine and ATP. The overall synthetic reaction is composed of two sequential steps, AdoMet formation and the subsequent tripolyphosphate hydrolysis which occurs prior to release of AdoMet from the enzyme. In Thermosynechococcus vestitus (strain NIES-2133 / IAM M-273 / BP-1), this protein is S-adenosylmethionine synthase.